The primary structure comprises 339 residues: Lipopolysaccharide glucosyltransferase WaaO (339 aa).

Residues 34 to 39 (GTDKNF) and 131 to 132 (DA) contribute to the UDP site. 2 residues coordinate Mg(2+): Asp131 and Asp133. Short sequence motifs (DXD) lie at residues 131–133 (DAD) and 220–222 (DQD). Mg(2+) is bound at residue His265. UDP is bound at residue 265 to 271 (HYIGPTK).

This sequence belongs to the glycosyltransferase 8 family. It depends on Mg(2+) as a cofactor.

The enzyme catalyses UDP-glucose + lipopolysaccharide = UDP + alpha-D-glucosyl-lipopolysaccharide.. The catalysed reaction is alpha-D-Gal-(1-&gt;6)-alpha-D-Glc-(1-&gt;3)-[L-alpha-D-Hep-(1-&gt;7)]-4-O-PO3(2-)-L-alpha-D-Hep-(1-&gt;3)-4-O-PO3(2-)-L-alpha-D-Hep-(1-&gt;5)-[alpha-Kdo-(2-&gt;4)]-alpha-Kdo-(2-&gt;6)-lipid A + UDP-alpha-D-glucose = alpha-D-Glc-(1-&gt;3)-[alpha-D-Gal-(1-&gt;6)]-alpha-D-Glc-(1-&gt;3)-[L-alpha-D-Hep-(1-&gt;7)]-4-O-PO3(2-)-L-alpha-D-Hep-(1-&gt;3)-4-O-PO3(2-)-L-alpha-D-Hep-(1-&gt;5)-[alpha-Kdo-(2-&gt;4)]-alpha-Kdo-(2-&gt;6)-lipid A + UDP + H(+). It functions in the pathway bacterial outer membrane biogenesis; LPS core biosynthesis. In terms of biological role, glucosyltransferase involved in the biosynthesis of the core oligosaccharide region of lipopolysaccharide (LPS). Catalyzes the addition of a second glucose (glucose II) to the first outer-core glucose (glucose I). In vitro, can add multiple glucose residues to its lipid acceptor. Activity does not require the branched galactose added by WaaB, but it is higher in the presence of this branched galactose. In the absence of a lipid acceptor, can hydrolyze UDP-glucose, but not UDP-galactose. This is Lipopolysaccharide glucosyltransferase WaaO from Escherichia coli (strain K12).